The following is a 449-amino-acid chain: Hyaluronidase-1 (449 aa).

Positions 1–23 (MYHIWIKFLAAWIFLKRFNGVHV) are cleaved as a signal peptide. Intrachain disulfides connect C47/C340 and C211/C227. N67, N103, and N111 each carry an N-linked (GlcNAc...) asparagine glycan. The active-site Proton donor is E135. N153 is a glycosylation site (N-linked (GlcNAc...) asparagine). N357 carries N-linked (GlcNAc...) asparagine glycosylation. Cystine bridges form between C365–C376, C370–C427, and C429–C438. N401 is a glycosylation site (N-linked (GlcNAc...) asparagine). An EGF-like domain is found at 427–438 (CQCYQGWKGLYC).

This sequence belongs to the glycosyl hydrolase 56 family. In terms of assembly, monomer. As to expression, expressed by the venom gland.

It is found in the secreted. The enzyme catalyses Random hydrolysis of (1-&gt;4)-linkages between N-acetyl-beta-D-glucosamine and D-glucuronate residues in hyaluronate.. In terms of biological role, snake venom endo-hyaluronidase that degrades hyaluronan to smaller oligosaccharide fragments. In venom, it is not toxic by itself, but increases the diffusion of other venom proteins by degrading the extracellular matrix. In addition, it displays antiedematogenic activity. The protein is Hyaluronidase-1 of Cerastes cerastes (Horned desert viper).